Here is a 743-residue protein sequence, read N- to C-terminus: Putative cation exchanger C3A12.06c (743 aa).

Transmembrane regions (helical) follow at residues 13 to 33, 109 to 129, 138 to 158, 182 to 202, 213 to 233, 239 to 258, 528 to 548, 551 to 571, 580 to 600, 609 to 629, 649 to 669, 690 to 710, and 718 to 738; these read LILLWCILGIAYILFWTHRIS, FPVLSIIVGWLIFLFITIGIS, LVTISWLLQLPDSVVGVTFLA, IGELLGSAFFIVAIVAGSVCL, FLRDVAFLTGTILLVIMFVLH, IWQSLVMILYYLLYVLFVFF, LRLLQCVFVPFAFVTFSITGG, LYIYAASSVFSILCITALYYY, FLPWVSFIGFVLGIIWISTIA, ALGVIFNLNESILGLTVFAAG, MAMGGVFGGPTLNILIGIGIS, LSITAYFLLACLLLLLIYVPL, and VLGLLLFILYIVGTSTNIVVE.

It belongs to the Ca(2+):cation antiporter (CaCA) (TC 2.A.19) family.

Its subcellular location is the endoplasmic reticulum membrane. Functionally, putative cation exchanger. The chain is Putative cation exchanger C3A12.06c from Schizosaccharomyces pombe (strain 972 / ATCC 24843) (Fission yeast).